The following is a 392-amino-acid chain: Bifunctional enzyme Fae/Hps (392 aa).

The interval 1–161 is formaldehyde-activating enzyme; the sequence is MFQIGEALMG…EESNKSTHAI (161 aa). His17 serves as the catalytic Proton donor. Substrate-binding residues include Asp19, Leu48, Lys66, Thr68, and Gln83. The interval 162-392 is 3-hexulose-6-phosphate synthase; it reads MGFKVTRLWD…IDQFRVMTDF (231 aa).

In the N-terminal section; belongs to the formaldehyde-activating enzyme family. The protein in the C-terminal section; belongs to the HPS/KGPDC family. HPS subfamily.

The enzyme catalyses 5,6,7,8-tetrahydromethanopterin + formaldehyde = 5,10-methylenetetrahydromethanopterin + H2O. It carries out the reaction D-ribulose 5-phosphate + formaldehyde = D-arabino-hex-3-ulose 6-phosphate. The protein operates within carbohydrate biosynthesis; D-ribose 5-phosphate biosynthesis. Functionally, catalyzes the condensation of formaldehyde with tetrahydromethanopterin (H(4)MPT) to 5,10-methylenetetrahydromethanopterin. Its function is as follows. Catalyzes the reversible formation of ribulose-5-phosphate and formaldehyde from 3-hexulose-6-phosphate. The polypeptide is Bifunctional enzyme Fae/Hps (Methanosarcina mazei (strain ATCC BAA-159 / DSM 3647 / Goe1 / Go1 / JCM 11833 / OCM 88) (Methanosarcina frisia)).